Reading from the N-terminus, the 220-residue chain is Octanoyltransferase (220 aa).

Residues 27–208 form the BPL/LPL catalytic domain; it reads PGTADEIWLC…QLARAHGQAV (182 aa). Residues 66-73, 139-141, and 152-154 each bind substrate; these read RGGQVTYH, ALG, and GLA. Cys170 (acyl-thioester intermediate) is an active-site residue.

It belongs to the LipB family.

It localises to the cytoplasm. It catalyses the reaction octanoyl-[ACP] + L-lysyl-[protein] = N(6)-octanoyl-L-lysyl-[protein] + holo-[ACP] + H(+). It functions in the pathway protein modification; protein lipoylation via endogenous pathway; protein N(6)-(lipoyl)lysine from octanoyl-[acyl-carrier-protein]: step 1/2. In terms of biological role, catalyzes the transfer of endogenously produced octanoic acid from octanoyl-acyl-carrier-protein onto the lipoyl domains of lipoate-dependent enzymes. Lipoyl-ACP can also act as a substrate although octanoyl-ACP is likely to be the physiological substrate. In Bordetella bronchiseptica (strain ATCC BAA-588 / NCTC 13252 / RB50) (Alcaligenes bronchisepticus), this protein is Octanoyltransferase.